The following is a 177-amino-acid chain: Translation initiation factor IF-3 (177 aa).

The protein belongs to the IF-3 family. In terms of assembly, monomer.

The protein localises to the cytoplasm. IF-3 binds to the 30S ribosomal subunit and shifts the equilibrium between 70S ribosomes and their 50S and 30S subunits in favor of the free subunits, thus enhancing the availability of 30S subunits on which protein synthesis initiation begins. This Nostoc punctiforme (strain ATCC 29133 / PCC 73102) protein is Translation initiation factor IF-3.